A 76-amino-acid chain; its full sequence is Large ribosomal subunit protein eL29 (76 aa).

The span at 1–29 shows a compositional bias: basic residues; that stretch reads MAKSKNHTNHNQNKKAHRNGIKRPLRKRH. Disordered stretches follow at residues 1-33 and 47-76; these read MAKS…ESTL and RKGN…PVTL. A Phosphoserine modification is found at serine 31. A compositionally biased stretch (basic and acidic residues) spans 51-62; the sequence is LSREESVKRYNE.

Belongs to the eukaryotic ribosomal protein eL29 family.

In Drosophila melanogaster (Fruit fly), this protein is Large ribosomal subunit protein eL29 (RpL29).